We begin with the raw amino-acid sequence, 173 residues long: Large ribosomal subunit protein bL9 (173 aa).

Residues 150–173 (KQEDKKSLSKKLNKADEQGERAEV) are disordered.

This sequence belongs to the bacterial ribosomal protein bL9 family.

Binds to the 23S rRNA. The chain is Large ribosomal subunit protein bL9 from Borreliella burgdorferi (strain ZS7) (Borrelia burgdorferi).